Consider the following 289-residue polypeptide: Ribosomal RNA small subunit methyltransferase I (289 aa).

The protein belongs to the methyltransferase superfamily. RsmI family.

The protein resides in the cytoplasm. The enzyme catalyses cytidine(1402) in 16S rRNA + S-adenosyl-L-methionine = 2'-O-methylcytidine(1402) in 16S rRNA + S-adenosyl-L-homocysteine + H(+). In terms of biological role, catalyzes the 2'-O-methylation of the ribose of cytidine 1402 (C1402) in 16S rRNA. The sequence is that of Ribosomal RNA small subunit methyltransferase I from Halalkalibacterium halodurans (strain ATCC BAA-125 / DSM 18197 / FERM 7344 / JCM 9153 / C-125) (Bacillus halodurans).